Here is a 427-residue protein sequence, read N- to C-terminus: Serine hydroxymethyltransferase (427 aa).

Residues leucine 122 and 126 to 128 (GHL) each bind (6S)-5,6,7,8-tetrahydrofolate. Position 231 is an N6-(pyridoxal phosphate)lysine (lysine 231). Residues glutamate 247 and 355–357 (SPF) contribute to the (6S)-5,6,7,8-tetrahydrofolate site.

This sequence belongs to the SHMT family. As to quaternary structure, homodimer. Pyridoxal 5'-phosphate is required as a cofactor.

The protein resides in the cytoplasm. It catalyses the reaction (6R)-5,10-methylene-5,6,7,8-tetrahydrofolate + glycine + H2O = (6S)-5,6,7,8-tetrahydrofolate + L-serine. It participates in one-carbon metabolism; tetrahydrofolate interconversion. Its pathway is amino-acid biosynthesis; glycine biosynthesis; glycine from L-serine: step 1/1. In terms of biological role, catalyzes the reversible interconversion of serine and glycine with tetrahydrofolate (THF) serving as the one-carbon carrier. This reaction serves as the major source of one-carbon groups required for the biosynthesis of purines, thymidylate, methionine, and other important biomolecules. Also exhibits THF-independent aldolase activity toward beta-hydroxyamino acids, producing glycine and aldehydes, via a retro-aldol mechanism. This Synechocystis sp. (strain ATCC 27184 / PCC 6803 / Kazusa) protein is Serine hydroxymethyltransferase.